Reading from the N-terminus, the 207-residue chain is Protein GrpE (207 aa).

2 stretches are compositionally biased toward basic and acidic residues: residues methionine 1–glutamate 11 and aspartate 57–asparagine 66. The interval methionine 1 to asparagine 66 is disordered.

The protein belongs to the GrpE family. As to quaternary structure, homodimer.

Its subcellular location is the cytoplasm. Participates actively in the response to hyperosmotic and heat shock by preventing the aggregation of stress-denatured proteins, in association with DnaK and GrpE. It is the nucleotide exchange factor for DnaK and may function as a thermosensor. Unfolded proteins bind initially to DnaJ; upon interaction with the DnaJ-bound protein, DnaK hydrolyzes its bound ATP, resulting in the formation of a stable complex. GrpE releases ADP from DnaK; ATP binding to DnaK triggers the release of the substrate protein, thus completing the reaction cycle. Several rounds of ATP-dependent interactions between DnaJ, DnaK and GrpE are required for fully efficient folding. In Clostridium beijerinckii (strain ATCC 51743 / NCIMB 8052) (Clostridium acetobutylicum), this protein is Protein GrpE.